The primary structure comprises 276 residues: Diaminopimelate epimerase (276 aa).

Residues asparagine 13, glutamine 46, and asparagine 66 each coordinate substrate. Cysteine 75 (proton donor) is an active-site residue. Substrate is bound by residues 76 to 77, asparagine 159, asparagine 192, and 210 to 211; these read GN and ER. Cysteine 219 serves as the catalytic Proton acceptor. 220 to 221 is a substrate binding site; the sequence is GT.

This sequence belongs to the diaminopimelate epimerase family. In terms of assembly, homodimer.

The protein localises to the cytoplasm. It carries out the reaction (2S,6S)-2,6-diaminopimelate = meso-2,6-diaminopimelate. The protein operates within amino-acid biosynthesis; L-lysine biosynthesis via DAP pathway; DL-2,6-diaminopimelate from LL-2,6-diaminopimelate: step 1/1. Its function is as follows. Catalyzes the stereoinversion of LL-2,6-diaminopimelate (L,L-DAP) to meso-diaminopimelate (meso-DAP), a precursor of L-lysine and an essential component of the bacterial peptidoglycan. The polypeptide is Diaminopimelate epimerase (Ectopseudomonas mendocina (strain ymp) (Pseudomonas mendocina)).